Consider the following 380-residue polypeptide: tRNA-specific 2-thiouridylase MnmA (380 aa).

ATP-binding positions include 9–16 (GVSGGVDS) and M35. Positions 94–96 (NPD) are interaction with target base in tRNA. The active-site Nucleophile is C99. C99 and C195 form a disulfide bridge. G123 is an ATP binding site. The segment at 145–147 (KDQ) is interaction with tRNA. C195 acts as the Cysteine persulfide intermediate in catalysis. The tract at residues 308–309 (RY) is interaction with tRNA.

It belongs to the MnmA/TRMU family.

The protein resides in the cytoplasm. It carries out the reaction S-sulfanyl-L-cysteinyl-[protein] + uridine(34) in tRNA + AH2 + ATP = 2-thiouridine(34) in tRNA + L-cysteinyl-[protein] + A + AMP + diphosphate + H(+). Catalyzes the 2-thiolation of uridine at the wobble position (U34) of tRNA, leading to the formation of s(2)U34. This Stenotrophomonas maltophilia (strain K279a) protein is tRNA-specific 2-thiouridylase MnmA.